Here is a 234-residue protein sequence, read N- to C-terminus: Leucyl/phenylalanyl-tRNA--protein transferase (234 aa).

This sequence belongs to the L/F-transferase family.

The protein localises to the cytoplasm. The enzyme catalyses N-terminal L-lysyl-[protein] + L-leucyl-tRNA(Leu) = N-terminal L-leucyl-L-lysyl-[protein] + tRNA(Leu) + H(+). It carries out the reaction N-terminal L-arginyl-[protein] + L-leucyl-tRNA(Leu) = N-terminal L-leucyl-L-arginyl-[protein] + tRNA(Leu) + H(+). It catalyses the reaction L-phenylalanyl-tRNA(Phe) + an N-terminal L-alpha-aminoacyl-[protein] = an N-terminal L-phenylalanyl-L-alpha-aminoacyl-[protein] + tRNA(Phe). Its function is as follows. Functions in the N-end rule pathway of protein degradation where it conjugates Leu, Phe and, less efficiently, Met from aminoacyl-tRNAs to the N-termini of proteins containing an N-terminal arginine or lysine. This is Leucyl/phenylalanyl-tRNA--protein transferase from Salmonella gallinarum (strain 287/91 / NCTC 13346).